A 787-amino-acid polypeptide reads, in one-letter code: Protein FAM149A (787 aa).

7 disordered regions span residues 22-105, 144-175, 189-226, 238-284, 432-455, 573-602, and 665-697; these read SPAV…SSGA, GSNSVTASSPRNPRQLRAPGEREPSVWMAPGP, EEWTSDSDSQDDPEGRGLSEGLRKQSSEKSKDPLPTNF, ASES…SWRD, DGDEHLGQSPALRGRKRHRHGLPP, LQQRPTYSADRTQNDQDDKLPGGGVGASSR, and AVQTSRSRLPPIGSETGEPNTAASGSRPVSYRG. Over residues 37–46 the composition is skewed to polar residues; sequence SVDSGASTSL. 2 stretches are compositionally biased toward low complexity: residues 51–65 and 96–105; these read TLTLLPSLPPDTAAS and SGSLPSSSGA. Polar residues predominate over residues 144-155; that stretch reads GSNSVTASSPRN. The span at 189 to 200 shows a compositional bias: acidic residues; it reads EEWTSDSDSQDD. The segment covering 201–220 has biased composition (basic and acidic residues); sequence PEGRGLSEGLRKQSSEKSKD. Residues 239 to 250 show a composition bias toward low complexity; the sequence is SESPSSFSSSGS. The segment covering 251 to 261 has biased composition (polar residues); that stretch reads RTPTEAHNSWP. Residues 262-274 are compositionally biased toward low complexity; that stretch reads GSSTQSSTTGLST.

This sequence belongs to the FAM149 family.

In Mus musculus (Mouse), this protein is Protein FAM149A (Fam149a).